Here is a 511-residue protein sequence, read N- to C-terminus: NADH-quinone oxidoreductase subunit N 1 (511 aa).

A run of 14 helical transmembrane segments spans residues 15 to 35, 46 to 66, 89 to 109, 120 to 140, 142 to 162, 177 to 197, 221 to 241, 264 to 284, 289 to 309, 317 to 337, 347 to 367, 393 to 413, 426 to 446, and 471 to 491; these read LALP…LDLV, ALAL…WQAV, FAIY…LMSI, GEYH…ASGM, LILL…LVGF, LLLG…FYGL, PIAL…IAAV, VAVK…MLWP, YTPI…FAAL, LLAY…VASD, GILV…AVIT, AVLL…AGFW, GHYT…YYYL, and AALW…EVFL.

Belongs to the complex I subunit 2 family. As to quaternary structure, NDH-1 is composed of 14 different subunits. Subunits NuoA, H, J, K, L, M, N constitute the membrane sector of the complex.

It is found in the cell inner membrane. The catalysed reaction is a quinone + NADH + 5 H(+)(in) = a quinol + NAD(+) + 4 H(+)(out). Its function is as follows. NDH-1 shuttles electrons from NADH, via FMN and iron-sulfur (Fe-S) centers, to quinones in the respiratory chain. The immediate electron acceptor for the enzyme in this species is believed to be ubiquinone. Couples the redox reaction to proton translocation (for every two electrons transferred, four hydrogen ions are translocated across the cytoplasmic membrane), and thus conserves the redox energy in a proton gradient. The polypeptide is NADH-quinone oxidoreductase subunit N 1 (Koribacter versatilis (strain Ellin345)).